We begin with the raw amino-acid sequence, 515 residues long: Rop guanine nucleotide exchange factor 12 (515 aa).

A PRONE domain is found at 83-446 (QARERQLLAD…RAGNKRNTPL (364 aa)). S510 bears the Phosphoserine mark.

Interacts (via C-terminus) with PRK2. Interacts with PRK6. Expressed in pollen grains.

It is found in the cytoplasm. The protein resides in the cell membrane. Its activity is regulated as follows. Phosphorylation at Ser-510 by PRK2 may release ROPGEF12 auto-inhibition, thereby activating ROPGEF12 and downstream Rop signaling. Its function is as follows. Guanine-nucleotide exchange factor (GEF) that acts as an activator of Rop (Rho of plants) GTPases by promoting the exchange of GDP for GTP. May be recruited by PRK2 at the plasma membrane to maintain polar Rop activity in the pollen tube and control polarized pollen tube growth. The sequence is that of Rop guanine nucleotide exchange factor 12 from Arabidopsis thaliana (Mouse-ear cress).